The chain runs to 429 residues: Saccharopine dehydrogenase-like oxidoreductase (429 aa).

Residue alanine 2 is modified to N-acetylalanine. Residues serine 209, serine 215, and serine 217 each carry the phosphoserine modification.

This sequence belongs to the saccharopine dehydrogenase family.

This chain is Saccharopine dehydrogenase-like oxidoreductase (Sccpdh), found in Rattus norvegicus (Rat).